The sequence spans 195 residues: dITP/XTP pyrophosphatase (195 aa).

8-13 (TNNQGK) contributes to the substrate binding site. Mg(2+) is bound by residues E39 and D68. Residue D68 is the Proton acceptor of the active site. Substrate is bound by residues S69, 149-152 (FGYD), K172, and 177-178 (HR).

The protein belongs to the HAM1 NTPase family. In terms of assembly, homodimer. Requires Mg(2+) as cofactor.

The catalysed reaction is XTP + H2O = XMP + diphosphate + H(+). It catalyses the reaction dITP + H2O = dIMP + diphosphate + H(+). The enzyme catalyses ITP + H2O = IMP + diphosphate + H(+). Pyrophosphatase that catalyzes the hydrolysis of nucleoside triphosphates to their monophosphate derivatives, with a high preference for the non-canonical purine nucleotides XTP (xanthosine triphosphate), dITP (deoxyinosine triphosphate) and ITP. Seems to function as a house-cleaning enzyme that removes non-canonical purine nucleotides from the nucleotide pool, thus preventing their incorporation into DNA/RNA and avoiding chromosomal lesions. The polypeptide is dITP/XTP pyrophosphatase (Staphylococcus epidermidis (strain ATCC 35984 / DSM 28319 / BCRC 17069 / CCUG 31568 / BM 3577 / RP62A)).